Reading from the N-terminus, the 356-residue chain is Mannonate dehydratase 2 (356 aa).

Belongs to the mannonate dehydratase family. It depends on Fe(2+) as a cofactor. Mn(2+) serves as cofactor.

The catalysed reaction is D-mannonate = 2-dehydro-3-deoxy-D-gluconate + H2O. Its pathway is carbohydrate metabolism; pentose and glucuronate interconversion. Catalyzes the dehydration of D-mannonate. This Bacillus licheniformis (strain ATCC 14580 / DSM 13 / JCM 2505 / CCUG 7422 / NBRC 12200 / NCIMB 9375 / NCTC 10341 / NRRL NRS-1264 / Gibson 46) protein is Mannonate dehydratase 2.